The chain runs to 819 residues: Glycine-rich domain-containing protein 1 (819 aa).

In terms of biological role, plays a regulatory role in abscisic acid (ABA) signaling and tolerance to abiotic stress during germination. May be involved in the regulation of the ABI transcriptional factors. The chain is Glycine-rich domain-containing protein 1 from Arabidopsis thaliana (Mouse-ear cress).